Reading from the N-terminus, the 414-residue chain is Histidine--tRNA ligase (414 aa).

The protein belongs to the class-II aminoacyl-tRNA synthetase family. As to quaternary structure, homodimer.

The protein resides in the cytoplasm. It catalyses the reaction tRNA(His) + L-histidine + ATP = L-histidyl-tRNA(His) + AMP + diphosphate + H(+). The polypeptide is Histidine--tRNA ligase (Rickettsia conorii (strain ATCC VR-613 / Malish 7)).